A 386-amino-acid polypeptide reads, in one-letter code: S-adenosylmethionine synthase (386 aa).

H16 serves as a coordination point for ATP. Mg(2+) is bound at residue D18. E44 is a binding site for K(+). L-methionine-binding residues include E57 and Q100. The segment at 100-110 is flexible loop; that stretch reads QSRDITQGVDR. Residues 165–167, D240, 246–247, A263, and K267 each bind ATP; these read DAK and RK. D240 is an L-methionine binding site. K271 lines the L-methionine pocket.

The protein belongs to the AdoMet synthase family. In terms of assembly, homotetramer; dimer of dimers. Requires Mg(2+) as cofactor. K(+) is required as a cofactor.

It localises to the cytoplasm. The catalysed reaction is L-methionine + ATP + H2O = S-adenosyl-L-methionine + phosphate + diphosphate. It participates in amino-acid biosynthesis; S-adenosyl-L-methionine biosynthesis; S-adenosyl-L-methionine from L-methionine: step 1/1. Functionally, catalyzes the formation of S-adenosylmethionine (AdoMet) from methionine and ATP. The overall synthetic reaction is composed of two sequential steps, AdoMet formation and the subsequent tripolyphosphate hydrolysis which occurs prior to release of AdoMet from the enzyme. The sequence is that of S-adenosylmethionine synthase from Francisella tularensis subsp. tularensis (strain FSC 198).